Reading from the N-terminus, the 804-residue chain is MSMHRVARAVASTEACAGALRGSVPRARFLCLNSPVQGLGARNAILGARLGGKRHFSQSPIIRAGVAQAVLEKAAADPSALTQEAIVDNLNAAERDRLRRVRNIGIAAHIDSGKTTATERVLFYTGRINAIHEVRGKDAVGAKMDSMELEREKGITIQSAATFCDWLKVENGKEEKYHINLIDTPGHIDFTIEVERALRVLDGAVMILCAVSGVQSQTITVDRQMRRYNVPRISFINKMDRMGANPFKAVEQINQKLRIPAAALQVPIGSEDSFNGVVDLIRMKAIYNDGPKGEIIRETDEIPEELKKLCEEKRALLIETLADVDDEIAEIFLDEKTPSIEQMKAAIRRATINLKFTPVLMGSALADKSVQPMLDAVCDYLPNPAEVENLALDKRRAEAPVKLVSYNELPFVGLAFKLEESNYGQLTYIRVYQGSLKKGMNVFNARTDKRVKIPRIVRMHSNEMEEVPEIGAGEICAVFGVDCASGDTFTDGGLPYSMSSMFVPDPVISLSIKPKTTKDGSNFSKAMNRFQREDPTFRVHVDAESQETIISGMGELHLDIYVERMRREYKVEVETGKPQVAYRETITEHVVFDHTLKKQTGGAGDYARVVGFLEPIEPGPNGYAPSTFKEEVTGGSISDKFLFACEKGFLASCEKGPLLGHPVLGTHMVVNDGATHMTDSSEMAFKNATQQAFRKAFKEGKPQVLEPLMKTTITAPNEFQGNIVGLLNKRNAIISDTEIGPEDFTLIADCSLNAMFGFSSQLRAATQGKGEFGMEFSHYAPAPGQLQKELISNYEKAQADRHKK.

The N-terminal 63 residues, 1-63 (MSMHRVARAV…RHFSQSPIIR (63 aa)), are a transit peptide targeting the mitochondrion. The tr-type G domain occupies 99 to 385 (RRVRNIGIAA…AVCDYLPNPA (287 aa)). Residues 108-115 (AHIDSGKT), 183-187 (DTPGH), and 237-240 (NKMD) each bind GTP.

It belongs to the TRAFAC class translation factor GTPase superfamily. Classic translation factor GTPase family. EF-G/EF-2 subfamily.

Its subcellular location is the mitochondrion. Its pathway is protein biosynthesis; polypeptide chain elongation. Its function is as follows. Mitochondrial GTPase that catalyzes the GTP-dependent ribosomal translocation step during translation elongation. During this step, the ribosome changes from the pre-translocational (PRE) to the post-translocational (POST) state as the newly formed A-site-bound peptidyl-tRNA and P-site-bound deacylated tRNA move to the P and E sites, respectively. Catalyzes the coordinated movement of the two tRNA molecules, the mRNA and conformational changes in the ribosome. The sequence is that of Elongation factor G, mitochondrial (mef1) from Botryotinia fuckeliana (strain B05.10) (Noble rot fungus).